Here is a 410-residue protein sequence, read N- to C-terminus: F-box protein At3g19890 (410 aa).

In terms of domain architecture, F-box spans 2–49 (TMISDLSKDLVEEILSKAPITSLGAVRSTHKQWNALSKGRLLYKAEAK). Residues 386–410 (EDKCKSIKMVDTKRQRKKRKRKSKR) form a disordered region. Over residues 387–398 (DKCKSIKMVDTK) the composition is skewed to basic and acidic residues. Basic residues predominate over residues 399-410 (RQRKKRKRKSKR).

This is F-box protein At3g19890 from Arabidopsis thaliana (Mouse-ear cress).